The sequence spans 89 residues: Small ribosomal subunit protein uS15 (89 aa).

The span at 1-18 (MSLDTAEKQKLIENHQVH) shows a compositional bias: basic and acidic residues. Residues 1–23 (MSLDTAEKQKLIENHQVHPTDTG) are disordered.

This sequence belongs to the universal ribosomal protein uS15 family. Part of the 30S ribosomal subunit. Forms a bridge to the 50S subunit in the 70S ribosome, contacting the 23S rRNA.

Functionally, one of the primary rRNA binding proteins, it binds directly to 16S rRNA where it helps nucleate assembly of the platform of the 30S subunit by binding and bridging several RNA helices of the 16S rRNA. In terms of biological role, forms an intersubunit bridge (bridge B4) with the 23S rRNA of the 50S subunit in the ribosome. The chain is Small ribosomal subunit protein uS15 from Prochlorococcus marinus (strain MIT 9301).